The chain runs to 455 residues: Fumarate hydratase class II (455 aa).

Substrate is bound by residues 96–98 (SGT), 122–125 (HPND), 132–134 (SSN), and T180. H181 (proton donor/acceptor) is an active-site residue. The active site involves S311. Substrate is bound by residues S312 and 317–319 (KVN).

It belongs to the class-II fumarase/aspartase family. Fumarase subfamily. In terms of assembly, homotetramer.

Its subcellular location is the cytoplasm. The enzyme catalyses (S)-malate = fumarate + H2O. The protein operates within carbohydrate metabolism; tricarboxylic acid cycle; (S)-malate from fumarate: step 1/1. In terms of biological role, involved in the TCA cycle. Catalyzes the stereospecific interconversion of fumarate to L-malate. This is Fumarate hydratase class II from Listeria monocytogenes serovar 1/2a (strain ATCC BAA-679 / EGD-e).